The chain runs to 39 residues: TVINVKCTSPKQCLKPCKDLYGPHAGAKCMNGKCKCYNN.

Disulfide bonds link Cys7–Cys29, Cys13–Cys34, and Cys17–Cys36.

Belongs to the short scorpion toxin superfamily. Potassium channel inhibitor family. Alpha-KTx 02 subfamily. In terms of tissue distribution, expressed by the venom gland.

The protein localises to the secreted. Functionally, blocks Kv1.3/KCNA3 voltage-gated potassium channels of human T-lymphocytes (Kd=0.71 nM). The protein is Potassium channel toxin alpha-KTx 2.8 of Centruroides elegans (Bark scorpion).